Consider the following 225-residue polypeptide: Cytidylate kinase (225 aa).

An ATP-binding site is contributed by 11–19 (GPSGAGKGT).

Belongs to the cytidylate kinase family. Type 1 subfamily.

The protein localises to the cytoplasm. It catalyses the reaction CMP + ATP = CDP + ADP. The catalysed reaction is dCMP + ATP = dCDP + ADP. This is Cytidylate kinase from Mannheimia succiniciproducens (strain KCTC 0769BP / MBEL55E).